The primary structure comprises 1001 residues: Serine/threonine-protein kinase TAO1 (1001 aa).

The residue at position 9 (serine 9) is a Phosphoserine. Positions 28–281 (FTDLREIGHG…SEELLKHMFV (254 aa)) constitute a Protein kinase domain. ATP contacts are provided by residues 34 to 42 (IGHGSFGAV) and lysine 57. Catalysis depends on aspartate 151, which acts as the Proton acceptor. Disordered stretches follow at residues 324 to 380 (PAVE…DKSE) and 404 to 431 (ENYQ…HKSH). The segment covering 350 to 370 (SNQSIPSMSISASSQSSSVNS) has biased composition (low complexity). 2 positions are modified to phosphoserine: serine 421 and serine 445. The stretch at 458-651 (SELREQMSGY…QTQKDLEHAM (194 aa)) forms a coiled coil. Positions 567-587 (KEELNENQSTPKKEKQEWLSK) are disordered. Over residues 577-587 (PKKEKQEWLSK) the composition is skewed to basic and acidic residues. A Phosphothreonine modification is found at threonine 669. Residues 754 to 877 (KAVLKRLKEE…LERQAREIEA (124 aa)) adopt a coiled-coil conformation. Residues 905-1001 (PGASSWSHNP…ISNGSHMSYT (97 aa)) are disordered. Polar residues predominate over residues 906 to 915 (GASSWSHNPT). Phosphoserine is present on serine 965. Positions 975–1001 (GGRTEQGMSRSTSVTSQISNGSHMSYT) are enriched in polar residues.

Belongs to the protein kinase superfamily. STE Ser/Thr protein kinase family. STE20 subfamily. In terms of assembly, self-associates. Interacts with MAP2K3. Interacts with SPRED1. Interacts with TESK1; the interaction inhibits TAOK1 kinase activity. Interacts with MAP3K7. In terms of processing, proteolytically processed by caspase-3 (CASP3). Autophosphorylated. Phosphorylated by ATM in response to DNA damage. Phosphorylated by LRRK2.

The protein localises to the cytoplasm. It carries out the reaction L-seryl-[protein] + ATP = O-phospho-L-seryl-[protein] + ADP + H(+). The enzyme catalyses L-threonyl-[protein] + ATP = O-phospho-L-threonyl-[protein] + ADP + H(+). With respect to regulation, serine/threonine-protein kinase activity is inhibited by SPRED1. Serine/threonine-protein kinase involved in various processes such as p38/MAPK14 stress-activated MAPK cascade, DNA damage response and regulation of cytoskeleton stability. Phosphorylates MAP2K3, MAP2K6 and MARK2. Acts as an activator of the p38/MAPK14 stress-activated MAPK cascade by mediating phosphorylation and subsequent activation of the upstream MAP2K3 and MAP2K6 kinases. Involved in G-protein coupled receptor signaling to p38/MAPK14. In response to DNA damage, involved in the G2/M transition DNA damage checkpoint by activating the p38/MAPK14 stress-activated MAPK cascade, probably by mediating phosphorylation of MAP2K3 and MAP2K6. Acts as a regulator of cytoskeleton stability by phosphorylating 'Thr-208' of MARK2, leading to activate MARK2 kinase activity and subsequent phosphorylation and detachment of MAPT/TAU from microtubules. Also acts as a regulator of apoptosis: regulates apoptotic morphological changes, including cell contraction, membrane blebbing and apoptotic bodies formation via activation of the MAPK8/JNK cascade. During fetal development, it plays an essential role in the regulation of neuronal differentiation and migration to the cortical plate. The sequence is that of Serine/threonine-protein kinase TAO1 (Taok1) from Rattus norvegicus (Rat).